The primary structure comprises 566 residues: Urease subunit alpha (566 aa).

Residues 128 to 566 (GGIDSHVHFI…LPMAQRYFLF (439 aa)) form the Urease domain. Ni(2+)-binding residues include His133, His135, and Lys216. Position 216 is an N6-carboxylysine (Lys216). Residue His218 participates in substrate binding. The Ni(2+) site is built by His245 and His271. Catalysis depends on His319, which acts as the Proton donor. Position 359 (Asp359) interacts with Ni(2+).

It belongs to the metallo-dependent hydrolases superfamily. Urease alpha subunit family. Heterotrimer of UreA (gamma), UreB (beta) and UreC (alpha) subunits. Three heterotrimers associate to form the active enzyme. The cofactor is Ni cation. Post-translationally, carboxylation allows a single lysine to coordinate two nickel ions.

Its subcellular location is the cytoplasm. It catalyses the reaction urea + 2 H2O + H(+) = hydrogencarbonate + 2 NH4(+). Its pathway is nitrogen metabolism; urea degradation; CO(2) and NH(3) from urea (urease route): step 1/1. The chain is Urease subunit alpha from Nitrosococcus oceani (strain ATCC 19707 / BCRC 17464 / JCM 30415 / NCIMB 11848 / C-107).